An 840-amino-acid polypeptide reads, in one-letter code: Intracellular phospholipase A1 (840 aa).

Disordered regions lie at residues 1-142 and 666-718; these read MSGS…RRRK and KKNK…AANA. Basic and acidic residues predominate over residues 26-39; it reads GKVKQKEKPKEKQM. A compositionally biased stretch (low complexity) spans 97-111; sequence SRPSGLPSNGNPGSS. A DDHD domain is found at 564-827; the sequence is LEFKVKYLFA…ALFLANVLYC (264 aa). Residues 668-680 are compositionally biased toward basic and acidic residues; sequence NKDDKTADARSGG. Acidic residues predominate over residues 681–694; it reads DDENEDEDECDSDE.

Belongs to the PA-PLA1 family.

The catalysed reaction is 1,2-dihexadecanoyl-sn-glycero-3-phospho-(1D-myo-inositol) + H2O = 2-hexadecanoyl-sn-glycero-3-phospho-(1D-myo-inositol) + hexadecanoate + H(+). It catalyses the reaction a 1,2-diacyl-sn-glycero-3-phospho-L-serine + H2O = a 2-acyl-sn-glycero-3-phospho-L-serine + a fatty acid + H(+). The enzyme catalyses 1-hexadecanoyl-2-(9Z-octadecenoyl)-sn-glycero-3-phospho-L-serine + H2O = 2-(9Z-octadecenoyl)-sn-glycero-3-phospho-L-serine + hexadecanoate + H(+). It carries out the reaction 1,2-di-(9Z-octadecenoyl)-sn-glycero-3-phosphocholine + H2O = (9Z-octadecenoyl)-sn-glycero-3-phosphocholine + (9Z)-octadecenoate + H(+). The catalysed reaction is a 1,2-diacyl-sn-glycero-3-phosphocholine + H2O = a 1-acyl-sn-glycero-3-phosphocholine + a fatty acid + H(+). It catalyses the reaction 1,2-dihexadecanoyl-sn-glycero-3-phosphocholine + H2O = 1-hexadecanoyl-sn-glycero-3-phosphocholine + hexadecanoate + H(+). Its activity is regulated as follows. Inhibited by E-6-bromomethylene-3-1-naphthalenyl-2H-tetrahydropyran-2-one (BEL) in vitro. Functionally, hydrolyzes the ester bond at the sn-1 position of glycerophospholipids and produces 2-acyl lysophospholipids, being phosphatidylinositol (PI) its major substrate. PI is a versatile lipid that not only serves as a structural component of cellular membranes, but also plays important roles in signal transduction through distinct phosphorylated derivatives of the inositol head group. Catalyzes the hydrolysis of phosphatidylcholine at sn-2 position in vitro. Regulates asymmetric division, an important property of stem cells in C.elegans, by controlling the subcellular localizations of beta-catenin. This chain is Intracellular phospholipase A1, found in Caenorhabditis elegans.